The chain runs to 313 residues: Solute carrier family 35 member E3 (313 aa).

Transmembrane regions (helical) follow at residues 14–34 (IIAG…INKW), 40–60 (GFPN…GLFI), 77–97 (ILLL…SLQS), 100–122 (IGTY…TMYY), 130–146 (IKLT…LNSY), 153–173 (LMGM…QVWV), 187–207 (LLYY…PFFE), 215–235 (IFGP…VIAF), 252–272 (TYNM…YVLF), and 275–295 (PLSL…LAYT).

Belongs to the TPT transporter family. SLC35E subfamily.

Its subcellular location is the membrane. Putative transporter. This Danio rerio (Zebrafish) protein is Solute carrier family 35 member E3 (slc35e3).